Reading from the N-terminus, the 277-residue chain is 3-methyl-2-oxobutanoate hydroxymethyltransferase (277 aa).

2 residues coordinate Mg(2+): Asp-49 and Asp-88. 3-methyl-2-oxobutanoate is bound by residues 49-50, Asp-88, and Lys-118; that span reads DS. Position 120 (Glu-120) interacts with Mg(2+). Residue Glu-186 is the Proton acceptor of the active site.

The protein belongs to the PanB family. As to quaternary structure, homodecamer; pentamer of dimers. Requires Mg(2+) as cofactor.

It localises to the cytoplasm. The enzyme catalyses 3-methyl-2-oxobutanoate + (6R)-5,10-methylene-5,6,7,8-tetrahydrofolate + H2O = 2-dehydropantoate + (6S)-5,6,7,8-tetrahydrofolate. It participates in cofactor biosynthesis; (R)-pantothenate biosynthesis; (R)-pantoate from 3-methyl-2-oxobutanoate: step 1/2. In terms of biological role, catalyzes the reversible reaction in which hydroxymethyl group from 5,10-methylenetetrahydrofolate is transferred onto alpha-ketoisovalerate to form ketopantoate. The chain is 3-methyl-2-oxobutanoate hydroxymethyltransferase from Cereibacter sphaeroides (strain ATCC 17025 / ATH 2.4.3) (Rhodobacter sphaeroides).